The chain runs to 262 residues: Apolipoprotein A-I (262 aa).

The signal sequence occupies residues 1-18 (MKAVVLTLAVLFLTGSQA). 2 repeat units span residues 67-88 (LKLLDNWDTLASTLSKVREQLG) and 89-110 (PVTQEFWDNLEKETAALRQEMN). Positions 67–262 (LKLLDNWDTL…DEASKKLNAQ (196 aa)) are 10 X approximate tandem repeats. Residue methionine 109 is modified to Methionine sulfoxide. The stretch at 111 to 121 (KDLEEVKQKVQ) is one 3; half-length repeat. 5 tandem repeats follow at residues 122–142 (PYLDEFQRKWHEEVEIYRQKV), 144–165 (PLGEEFREGARQKVQELQDRLS), 166–184 (PLAQELRDRARAHVEKQLA), 185–206 (PYSDDLRQRLTARLEALKEGGG), and 207–227 (SLAEYHAKATEQLKALGEKAK). One copy of the 9; half-length repeat lies at 228–238 (PALEDLRQGLM). Methionine 238 is subject to Methionine sulfoxide. Residues 239-262 (PVLESLKVSILAAIDEASKKLNAQ) form repeat 10.

It belongs to the apolipoprotein A1/A4/E family. In terms of assembly, homodimer. Interacts with APOA1BP and CLU. Component of a sperm activating protein complex (SPAP), consisting of APOA1, an immunoglobulin heavy chain, an immunoglobulin light chain and albumin. Interacts with NDRG1. Interacts with SCGB3A2. Interacts with NAXE and YJEFN3. In terms of processing, glycosylated. Post-translationally, palmitoylated. Phosphorylation sites are present in the extracellular medium. In terms of tissue distribution, major protein of plasma HDL, also found in chylomicrons.

Its subcellular location is the secreted. Functionally, participates in the reverse transport of cholesterol from tissues to the liver for excretion by promoting cholesterol efflux from tissues and by acting as a cofactor for the lecithin cholesterol acyltransferase (LCAT). As part of the SPAP complex, activates spermatozoa motility. This is Apolipoprotein A-I (APOA1) from Pantholops hodgsonii (Chiru).